The primary structure comprises 253 residues: Triosephosphate isomerase (253 aa).

Position 8 to 10 (8 to 10) interacts with substrate; the sequence is NWK. Catalysis depends on His93, which acts as the Electrophile. Glu165 serves as the catalytic Proton acceptor. Residues Gly171, Ser210, and 231–232 contribute to the substrate site; that span reads GG.

This sequence belongs to the triosephosphate isomerase family. Homodimer.

The protein resides in the cytoplasm. It catalyses the reaction D-glyceraldehyde 3-phosphate = dihydroxyacetone phosphate. Its pathway is carbohydrate biosynthesis; gluconeogenesis. It functions in the pathway carbohydrate degradation; glycolysis; D-glyceraldehyde 3-phosphate from glycerone phosphate: step 1/1. In terms of biological role, involved in the gluconeogenesis. Catalyzes stereospecifically the conversion of dihydroxyacetone phosphate (DHAP) to D-glyceraldehyde-3-phosphate (G3P). In Francisella philomiragia subsp. philomiragia (strain ATCC 25017 / CCUG 19701 / FSC 153 / O#319-036), this protein is Triosephosphate isomerase.